Reading from the N-terminus, the 398-residue chain is MRKRTEPVALEHERCAAAGSSSSGSAAAALDADCRLKQNLRLTGTGAAEPRCAADAGMKRALGRRKGLWLRLRKILFCVLGLYIAIPFLIKLCPGIQAKLIFLNFVRVPYFIDLKKPQDQGLNHTCNYYLQPEEDVTIGVWHTVPAVWWKNAQGKDQMWYEDALASSHAIILYLHGNAGTRGGDHRVELYKVLSSLGYHVVTFDYRGWGDSVGTPSERGMTYDALHVFDWIKARSGDNPVYIWGHSLGTGVATNLVRRLCERETPPDALILESPFTNIREEAKSHPFSVIYRYFPGFDWFFLDPITSSGIKFANDENVKHISCPLLILHAEDDPVVPFQLGRKLYSIAAPARSFRDFKVQFVPFHSDLGYRHKYIYKSPELPRILREFLGKSEPEHQH.

The Cytoplasmic portion of the chain corresponds to 1–74; sequence MRKRTEPVAL…RKGLWLRLRK (74 aa). A helical membrane pass occupies residues 75–95; it reads ILFCVLGLYIAIPFLIKLCPG. The Extracellular portion of the chain corresponds to 96–398; that stretch reads IQAKLIFLNF…LGKSEPEHQH (303 aa). N-linked (GlcNAc...) asparagine glycosylation is present at N123. S246 acts as the Nucleophile in catalysis. Active-site charge relay system residues include D333 and H372.

This sequence belongs to the serine esterase family.

It localises to the endoplasmic reticulum membrane. The enzyme catalyses 1-(9Z-octadecenoyl)-sn-glycero-3-phospho-L-serine + H2O = sn-glycero-3-phospho-L-serine + (9Z)-octadecenoate + H(+). It catalyses the reaction 1-(9Z-octadecenoyl)-sn-glycero-3-phospho-(1'-sn-glycerol) + H2O = sn-glycero-3-phospho-(1'-sn-glycerol) + (9Z)-octadecenoate + H(+). The catalysed reaction is 1-(9Z-octadecenoyl)-sn-glycero-3-phospho-(1D-myo-inositol) + H2O = sn-glycero-3-phospho-1D-myo-inositol + (9Z)-octadecenoate + H(+). It carries out the reaction 1-(9Z-octadecenoyl)-sn-glycero-3-phosphoethanolamine + H2O = sn-glycero-3-phosphoethanolamine + (9Z)-octadecenoate + H(+). The enzyme catalyses 1-(9Z-octadecenoyl)-sn-glycero-3-phosphocholine + H2O = 1-(9Z-octadecenoyl)-sn-glycerol + phosphocholine + H(+). It catalyses the reaction 2-(9Z-octadecenoyl)-glycerol + H2O = glycerol + (9Z)-octadecenoate + H(+). The catalysed reaction is 1-hexadecanoyl-sn-glycero-3-phospho-L-serine + H2O = sn-glycero-3-phospho-L-serine + hexadecanoate + H(+). It carries out the reaction 2-(5Z,8Z,11Z,14Z-eicosatetraenoyl)-glycerol + H2O = glycerol + (5Z,8Z,11Z,14Z)-eicosatetraenoate + H(+). The enzyme catalyses Hydrolyzes glycerol monoesters of long-chain fatty acids.. It catalyses the reaction 1-decanoylglycerol + H2O = decanoate + glycerol + H(+). The catalysed reaction is 1-dodecanoylglycerol + H2O = dodecanoate + glycerol + H(+). It carries out the reaction 1-tetradecanoylglycerol + H2O = tetradecanoate + glycerol + H(+). The enzyme catalyses 2-hexadecanoylglycerol + H2O = glycerol + hexadecanoate + H(+). It catalyses the reaction 1-(9Z-octadecenoyl)-glycerol + H2O = glycerol + (9Z)-octadecenoate + H(+). The catalysed reaction is 2-(9Z,12Z-octadecadienoyl)-glycerol + H2O = (9Z,12Z)-octadecadienoate + glycerol + H(+). It carries out the reaction 1-(5Z,8Z,11Z,14Z-eicosatetraenoyl)-glycerol + H2O = glycerol + (5Z,8Z,11Z,14Z)-eicosatetraenoate + H(+). The enzyme catalyses 1-(9Z,12Z-octadecadienoyl)-glycerol + H2O = (9Z,12Z)-octadecadienoate + glycerol + H(+). It catalyses the reaction 1-hexadecanoylglycerol + H2O = glycerol + hexadecanoate + H(+). The catalysed reaction is 1-octadecanoylglycerol + H2O = octadecanoate + glycerol + H(+). It carries out the reaction 1-octadecanoyl-2-(9,10-epoxyoctadecanoyl)-sn-glycero-3-phospho-L-serine + H2O = 9,10-epoxyoctadecanoate + 1-octadecanoyl-sn-glycero-3-phosphoserine + H(+). The enzyme catalyses 1-octadecanoyl-2-(10-hydroxyoctadecanoyl)-sn-glycero-3-phospho-L-serine + H2O = 1-octadecanoyl-sn-glycero-3-phosphoserine + 10-hydroxyoctadecanoate + H(+). It catalyses the reaction 1-hexadecanoyl-2-(10-hydroxyoctadecanoyl)-sn-glycero-3-phospho-L-serine + H2O = 10-hydroxyoctadecanoate + 1-hexadecanoyl-sn-glycero-3-phospho-L-serine + H(+). Its function is as follows. Lysophosphatidylserine (LPS) lipase that mediates the hydrolysis of lysophosphatidylserine, a class of signaling lipids that regulates immunological and neurological processes. Represents a major lysophosphatidylserine lipase in the brain, thereby playing a key role in the central nervous system. Also able to hydrolyze oxidized phosphatidylserine; oxidized phosphatidylserine is produced in response to severe inflammatory stress and constitutes a proapoptotic 'eat me' signal. Also has monoacylglycerol (MAG) lipase activity: hydrolyzes 2-arachidonoylglycerol (2-AG), thereby acting as a regulator of endocannabinoid signaling pathways. Has a strong preference for very-long-chain lipid substrates; substrate specificity is likely due to improved catalysis and not improved substrate binding. The sequence is that of Lysophosphatidylserine lipase ABHD12 from Macaca fascicularis (Crab-eating macaque).